The sequence spans 260 residues: Homeobox-leucine zipper protein HOX25 (260 aa).

The span at 1–10 (MEDLVDELYG) shows a compositional bias: acidic residues. 3 disordered regions span residues 1–24 (MEDL…ARKR), 121–145 (ANGK…PESA), and 190–221 (SPES…YPSS). A DNA-binding region (homeobox) is located at residues 19 to 79 (AAARKRRLTA…NRRARWKTKQ (61 aa)). Positions 78 to 122 (KQLELDFDRLRAAHDELLAGRAALAADNESLRSQVILLTEKLQAN) are leucine-zipper. Residues 205–218 (SEDDCGGAGSDDDY) are compositionally biased toward acidic residues.

It belongs to the HD-ZIP homeobox family. Class I subfamily. As to expression, expressed in roots, leaf sheaths and blades and panicles.

The protein localises to the nucleus. In terms of biological role, probable transcription factor. This chain is Homeobox-leucine zipper protein HOX25 (HOX25), found in Oryza sativa subsp. indica (Rice).